The following is a 907-amino-acid chain: Protein translocase subunit SecA (907 aa).

Residues glutamine 87, glycine 105 to threonine 109, and aspartate 513 contribute to the ATP site. Residues glutamate 841 to arginine 853 are compositionally biased toward basic and acidic residues. Residues glutamate 841–asparagine 907 are disordered. Low complexity predominate over residues arginine 854 to glutamine 865. Basic and acidic residues predominate over residues glutamate 872–arginine 887. Zn(2+)-binding residues include cysteine 891, cysteine 893, cysteine 902, and histidine 903.

The protein belongs to the SecA family. In terms of assembly, monomer and homodimer. Part of the essential Sec protein translocation apparatus which comprises SecA, SecYEG and auxiliary proteins SecDF-YajC and YidC. Zn(2+) serves as cofactor.

It is found in the cell inner membrane. It localises to the cytoplasm. The catalysed reaction is ATP + H2O + cellular proteinSide 1 = ADP + phosphate + cellular proteinSide 2.. Its function is as follows. Part of the Sec protein translocase complex. Interacts with the SecYEG preprotein conducting channel. Has a central role in coupling the hydrolysis of ATP to the transfer of proteins into and across the cell membrane, serving both as a receptor for the preprotein-SecB complex and as an ATP-driven molecular motor driving the stepwise translocation of polypeptide chains across the membrane. In Vibrio vulnificus (strain YJ016), this protein is Protein translocase subunit SecA.